We begin with the raw amino-acid sequence, 431 residues long: Enolase (431 aa).

Residue Gln-167 participates in (2R)-2-phosphoglycerate binding. Glu-209 (proton donor) is an active-site residue. Residues Asp-246, Glu-290, and Asp-317 each contribute to the Mg(2+) site. 4 residues coordinate (2R)-2-phosphoglycerate: Lys-342, Arg-371, Ser-372, and Lys-393. Lys-342 serves as the catalytic Proton acceptor.

This sequence belongs to the enolase family. In terms of assembly, component of the RNA degradosome, a multiprotein complex involved in RNA processing and mRNA degradation. It depends on Mg(2+) as a cofactor.

Its subcellular location is the cytoplasm. The protein resides in the secreted. It localises to the cell surface. It carries out the reaction (2R)-2-phosphoglycerate = phosphoenolpyruvate + H2O. Its pathway is carbohydrate degradation; glycolysis; pyruvate from D-glyceraldehyde 3-phosphate: step 4/5. In terms of biological role, catalyzes the reversible conversion of 2-phosphoglycerate (2-PG) into phosphoenolpyruvate (PEP). It is essential for the degradation of carbohydrates via glycolysis. The polypeptide is Enolase (Yersinia pestis bv. Antiqua (strain Antiqua)).